The primary structure comprises 485 residues: MELYEQTIHNLQTQLQARQVSSVEITNSFLDRIESTDQSINAFITVTKEQALLDAAAADQRIAAGNCAPLTGIPVALKDIFLTEGVRTTSASKMLDNFIAPYDATAWTRMKSQGAVLLGKLNQDEFAMGSSCENSAFGPTRNPWNKDHIPGGSSGGSAAAIAAQQAVATLGTDTGGSIRQPASHCGCVGLKPTYGRVSRYGVIAYASSLDQVGPMTRDVTDAALLLGVIAGYDPKDSTSVDCPVPDYTAALQQGVKGLTIGLPKEYFIDGLDADVQQAMEQAIAVYRQLGAEFVEVSLPHTNYAVATYYLIATAEASSNLARYEGVRFGHRAKDTAGLIDLMMQSRSEGFGAEVKRRIMLGTYALSSGYYDAYYIKAQKVRTLIQQDFNEAFRSVDLLLTPVAPTPAFRIGEKTADPLQMYLSDIFTIPVNLAGICGISVPAGISSNGLPIGLQLLGRPFGEETILRAAFDFEQATQWHTKKAAL.

Active-site charge relay system residues include lysine 78 and serine 153. Serine 177 (acyl-ester intermediate) is an active-site residue.

It belongs to the amidase family. GatA subfamily. Heterotrimer of A, B and C subunits.

The catalysed reaction is L-glutamyl-tRNA(Gln) + L-glutamine + ATP + H2O = L-glutaminyl-tRNA(Gln) + L-glutamate + ADP + phosphate + H(+). In terms of biological role, allows the formation of correctly charged Gln-tRNA(Gln) through the transamidation of misacylated Glu-tRNA(Gln) in organisms which lack glutaminyl-tRNA synthetase. The reaction takes place in the presence of glutamine and ATP through an activated gamma-phospho-Glu-tRNA(Gln). This chain is Glutamyl-tRNA(Gln) amidotransferase subunit A, found in Trichlorobacter lovleyi (strain ATCC BAA-1151 / DSM 17278 / SZ) (Geobacter lovleyi).